Reading from the N-terminus, the 245-residue chain is Homeobox protein goosecoid (245 aa).

Residues 150–209 (KRRHRTIFTDEQLEALENLFQETKYPDVGTREQLARKVHLREEKVEVWFKNRRAKWRRQK) constitute a DNA-binding region (homeobox). The disordered stretch occupies residues 203–245 (AKWRRQKRSSSEESENAQKWNKASKTSPEKRQEDGKSDLDSDS). Positions 219 to 228 (AQKWNKASKT) are enriched in polar residues. Positions 229-245 (SPEKRQEDGKSDLDSDS) are enriched in basic and acidic residues.

It belongs to the paired homeobox family. Bicoid subfamily.

It is found in the nucleus. Functionally, involved in the development of the organizer region in the gastrula (Hensen node in chicken). The protein is Homeobox protein goosecoid (GSC) of Gallus gallus (Chicken).